The primary structure comprises 160 residues: Transcriptional repressor NrdR (160 aa).

Residues 1 to 11 (MRCPNCNSLDT) show a composition bias toward polar residues. Residues 1-20 (MRCPNCNSLDTQVKDSRPTE) are disordered. A zinc finger lies at 3-34 (CPNCNSLDTQVKDSRPTEDSSVIRRRRVCIAC). The region spanning 49–139 (LTVIKRNGRR…VYRNFREAKD (91 aa)) is the ATP-cone domain.

This sequence belongs to the NrdR family. It depends on Zn(2+) as a cofactor.

In terms of biological role, negatively regulates transcription of bacterial ribonucleotide reductase nrd genes and operons by binding to NrdR-boxes. This is Transcriptional repressor NrdR from Rhodopseudomonas palustris (strain HaA2).